A 532-amino-acid chain; its full sequence is Fe-S cluster assembly factor HCF101, chloroplastic (532 aa).

Residues 1 to 61 (MPLLHPQSLR…RVSQNLSVAK (61 aa)) constitute a chloroplast transit peptide. Position 62 is an N-acetylalanine (alanine 62). Residue 184-191 (CKGGVGKS) participates in ATP binding.

The protein belongs to the Mrp/NBP35 ATP-binding proteins family. The cofactor is [4Fe-4S] cluster. Expressed in aerial tissues exposed to light. Very low expression in roots.

The protein localises to the plastid. Its subcellular location is the chloroplast stroma. In terms of biological role, required for photosystem I (PSI) biosynthesis and assembly. May serve as a chloroplast scaffold protein that specifically assembles iron-sulfur (4Fe-4S) clusters and transfers them to the chloroplast PSI and ferredoxin-thioredoxin (FTR) complexes. Can assemble a 4Fe-4S cluster and transfer it to apoproteins in yeast cells. Probably not required for assembly or stability of plastidic 2Fe-2S clusters. The polypeptide is Fe-S cluster assembly factor HCF101, chloroplastic (HCF101) (Arabidopsis thaliana (Mouse-ear cress)).